The chain runs to 728 residues: Nucleolar GTP-binding protein 2 (728 aa).

Methionine 1 is subject to N-acetylmethionine. The segment at 1-33 (MVKPKYKGRSTINRSAASTNPDRVQGAGGQNMR) is disordered. Positions 10–22 (STINRSAASTNPD) are enriched in polar residues. The region spanning 207–368 (WGELYKVIDS…LIDCPGVVYP (162 aa)) is the CP-type G domain. GTP-binding positions include 317–324 (GYPNVGKS) and 361–365 (DCPGV). Disordered regions lie at residues 462–521 (PPNA…RNSE), 538–595 (VGPQ…DTKA), and 636–728 (YKEE…RQKQ). The segment covering 480 to 489 (EVPTETTQNN) has biased composition (low complexity). Residues 498-520 (EVERSDSITEKEPEGDCSQDRNS) are compositionally biased toward basic and acidic residues. Serine 504 bears the Phosphoserine mark. Acidic residues predominate over residues 553-586 (SDLEDLESSGEEEEQEQEQPGEDAEEERSPDTQE). Basic residues predominate over residues 718–728 (KHRRNKFRQKQ).

Belongs to the TRAFAC class YlqF/YawG GTPase family. NOG2 subfamily. Interacts with LYAR and RPL23A. Interacts with the nuclear importin-beta receptor and, at a lower extent, with importin-alpha.

Its subcellular location is the nucleus. It localises to the nucleolus. In terms of biological role, GTPase that associates with pre-60S ribosomal subunits in the nucleolus and is required for their nuclear export and maturation. May promote cell proliferation possibly by increasing p53/TP53 protein levels, and consequently those of its downstream product CDKN1A/p21, and decreasing RPL23A protein levels. This is Nucleolar GTP-binding protein 2 (Gnl2) from Mus musculus (Mouse).